Reading from the N-terminus, the 308-residue chain is tRNA dimethylallyltransferase (308 aa).

10–17 (GPTASGKT) is a binding site for ATP. 12 to 17 (TASGKT) lines the substrate pocket. Interaction with substrate tRNA stretches follow at residues 35 to 38 (DSSL) and 159 to 163 (QRIFR).

Belongs to the IPP transferase family. Monomer. Mg(2+) is required as a cofactor.

It carries out the reaction adenosine(37) in tRNA + dimethylallyl diphosphate = N(6)-dimethylallyladenosine(37) in tRNA + diphosphate. Catalyzes the transfer of a dimethylallyl group onto the adenine at position 37 in tRNAs that read codons beginning with uridine, leading to the formation of N6-(dimethylallyl)adenosine (i(6)A). This chain is tRNA dimethylallyltransferase, found in Francisella philomiragia subsp. philomiragia (strain ATCC 25017 / CCUG 19701 / FSC 153 / O#319-036).